The primary structure comprises 177 residues: Large ribosomal subunit protein uL10 (177 aa).

It belongs to the universal ribosomal protein uL10 family. Part of the ribosomal stalk of the 50S ribosomal subunit. The N-terminus interacts with L11 and the large rRNA to form the base of the stalk. The C-terminus forms an elongated spine to which L12 dimers bind in a sequential fashion forming a multimeric L10(L12)X complex.

Forms part of the ribosomal stalk, playing a central role in the interaction of the ribosome with GTP-bound translation factors. The chain is Large ribosomal subunit protein uL10 from Legionella pneumophila (strain Corby).